A 437-amino-acid polypeptide reads, in one-letter code: Serine carboxypeptidase-like 10 (437 aa).

The N-terminal stretch at 1 to 21 (MGSTLKHLLLLLLVLIRHVDS) is a signal peptide. Disulfide bonds link cysteine 80–cysteine 327, cysteine 243–cysteine 257, and cysteine 281–cysteine 293. Asparagine 101 is a glycosylation site (N-linked (GlcNAc...) asparagine). Residue serine 175 is part of the active site. The N-linked (GlcNAc...) asparagine glycan is linked to asparagine 328. Aspartate 362 is an active-site residue. N-linked (GlcNAc...) asparagine glycosylation is present at asparagine 378. Histidine 415 is an active-site residue. N-linked (GlcNAc...) asparagine glycosylation occurs at asparagine 422.

The protein belongs to the peptidase S10 family. In terms of tissue distribution, expressed in senescent leaves.

The protein localises to the secreted. Involved in the biosynthesis of sinapoylated anthocyanins. This is Serine carboxypeptidase-like 10 (SCPL10) from Arabidopsis thaliana (Mouse-ear cress).